A 113-amino-acid chain; its full sequence is UPF0122 protein Lreu_1156 (113 aa).

This sequence belongs to the UPF0122 family.

In terms of biological role, might take part in the signal recognition particle (SRP) pathway. This is inferred from the conservation of its genetic proximity to ftsY/ffh. May be a regulatory protein. The polypeptide is UPF0122 protein Lreu_1156 (Limosilactobacillus reuteri (strain DSM 20016) (Lactobacillus reuteri)).